Consider the following 589-residue polypeptide: Alpha-1,2-mannosyltransferase MNN22 (589 aa).

The Cytoplasmic segment spans residues 1–16 (MGSIFKDGRRILVRPK). The chain crosses the membrane as a helical span at residues 17-33 (SLIICLCLISIIFTQLI). Over 34 to 589 (RYQYQLIADE…NTIAWLGKKT (556 aa)) the chain is Extracellular. The segment at 50–77 (EDHSSSQSLKNTKLNSTRSSSPISPPKS) is disordered. Over residues 54–71 (SSQSLKNTKLNSTRSSSP) the composition is skewed to polar residues. Residues asparagine 64, asparagine 332, and asparagine 530 are each glycosylated (N-linked (GlcNAc...) asparagine).

The protein belongs to the MNN1/MNT family.

The protein localises to the golgi apparatus membrane. It functions in the pathway protein modification; protein glycosylation. In terms of biological role, alpha-1,2-mannosyltransferase required for cell wall integrity. Responsible for addition of the first alpha-1,2-linked mannose to form the branches on the mannan backbone of oligosaccharides. Addition of alpha-1,2-mannose is required for stabilization of the alpha-1,6-mannose backbone and hence regulates mannan fibril length; and is important for both immune recognition and virulence. The protein is Alpha-1,2-mannosyltransferase MNN22 (MNN22) of Candida albicans (strain SC5314 / ATCC MYA-2876) (Yeast).